A 228-amino-acid polypeptide reads, in one-letter code: Lipoprotein-releasing system ATP-binding protein LolD (228 aa).

The 223-residue stretch at 6–228 folds into the ABC transporter domain; sequence IKCINLNKSY…ENNQIFNYES (223 aa). 42–49 serves as a coordination point for ATP; it reads GKSGSGKT.

The protein belongs to the ABC transporter superfamily. Lipoprotein translocase (TC 3.A.1.125) family.

The protein localises to the cell inner membrane. Functionally, usually LolD forms an ABC transporter complex with LolC and LolE involved in the translocation of lipoprotein, in an ATP-dependent manner. However, LolE is certainly not functional as it is frameshifted. This Buchnera aphidicola subsp. Acyrthosiphon pisum (strain APS) (Acyrthosiphon pisum symbiotic bacterium) protein is Lipoprotein-releasing system ATP-binding protein LolD.